Reading from the N-terminus, the 40-residue chain is Large ribosomal subunit protein bL36B (40 aa).

Belongs to the bacterial ribosomal protein bL36 family.

The polypeptide is Large ribosomal subunit protein bL36B (Arthrobacter sp. (strain FB24)).